Reading from the N-terminus, the 212-residue chain is Large ribosomal subunit protein uL4 (212 aa).

Residues Arg45–Gly71 are disordered. Over residues Gly60–Gly71 the composition is skewed to basic residues.

The protein belongs to the universal ribosomal protein uL4 family. As to quaternary structure, part of the 50S ribosomal subunit.

In terms of biological role, one of the primary rRNA binding proteins, this protein initially binds near the 5'-end of the 23S rRNA. It is important during the early stages of 50S assembly. It makes multiple contacts with different domains of the 23S rRNA in the assembled 50S subunit and ribosome. Its function is as follows. Forms part of the polypeptide exit tunnel. The chain is Large ribosomal subunit protein uL4 from Nostoc punctiforme (strain ATCC 29133 / PCC 73102).